A 64-amino-acid polypeptide reads, in one-letter code: Outer envelope membrane protein 7 (64 aa).

The Chloroplast intermembrane portion of the chain corresponds to 1-11 (MGKTSGAKQAT). A helical transmembrane segment spans residues 12–32 (VVVAAMALGWLAIEIAFKPFL). The AKR2A-binding sequence (ABS) required for chloroplast outer envelope membrane targeting motif lies at 29–35 (KPFLDKF). At 33 to 64 (DKFRSSIDKSDPTKDPDDFDTAATATTSKEGL) the chain is on the cytoplasmic side. Residues 39–48 (IDKSDPTKDP) are compositionally biased toward basic and acidic residues. The tract at residues 39–64 (IDKSDPTKDPDDFDTAATATTSKEGL) is disordered. Residues 53–64 (TAATATTSKEGL) are compositionally biased toward low complexity.

In terms of assembly, interacts with AKR2A. In terms of tissue distribution, confined to green tissues.

It localises to the plastid. The protein resides in the chloroplast outer membrane. The polypeptide is Outer envelope membrane protein 7 (Arabidopsis thaliana (Mouse-ear cress)).